An 883-amino-acid chain; its full sequence is Phosphoenolpyruvate carboxylase (883 aa).

Active-site residues include H138 and K546.

It belongs to the PEPCase type 1 family. Mg(2+) serves as cofactor.

It catalyses the reaction oxaloacetate + phosphate = phosphoenolpyruvate + hydrogencarbonate. In terms of biological role, forms oxaloacetate, a four-carbon dicarboxylic acid source for the tricarboxylic acid cycle. This chain is Phosphoenolpyruvate carboxylase, found in Klebsiella pneumoniae (strain 342).